We begin with the raw amino-acid sequence, 536 residues long: Chaperonin GroEL 2 (536 aa).

ATP is bound by residues Thr29–Pro32, Lys50, Gly416, and Asp497.

Belongs to the chaperonin (HSP60) family. In terms of assembly, forms a cylinder of 14 subunits composed of two heptameric rings stacked back-to-back. Interacts with the co-chaperonin GroES.

The protein resides in the cytoplasm. The catalysed reaction is ATP + H2O + a folded polypeptide = ADP + phosphate + an unfolded polypeptide.. Its function is as follows. Together with its co-chaperonin GroES, plays an essential role in assisting protein folding. The GroEL-GroES system forms a nano-cage that allows encapsulation of the non-native substrate proteins and provides a physical environment optimized to promote and accelerate protein folding. In Chlamydia caviae (strain ATCC VR-813 / DSM 19441 / 03DC25 / GPIC) (Chlamydophila caviae), this protein is Chaperonin GroEL 2.